Reading from the N-terminus, the 620-residue chain is Chaperone protein HscA homolog (620 aa).

It belongs to the heat shock protein 70 family.

Chaperone involved in the maturation of iron-sulfur cluster-containing proteins. Has a low intrinsic ATPase activity which is markedly stimulated by HscB. In Shewanella woodyi (strain ATCC 51908 / MS32), this protein is Chaperone protein HscA homolog.